We begin with the raw amino-acid sequence, 242 residues long: uncharacterized protein (242 aa).

Disordered regions lie at residues 16-121 and 152-178; these read GLYK…GAMA and PVRP…TQPV. 2 stretches are compositionally biased toward pro residues: residues 50–64 and 97–113; these read PRPP…PSPA and EPRP…PPGP. Residues 157-172 show a composition bias toward basic residues; sequence KLPKGKGRLRRPRQSR. Phosphothreonine is present on T175. Phosphoserine is present on residues S192, S206, S216, S232, and S238. The disordered stretch occupies residues 215–242; sequence QSLSLQREPLGSCKLRNSLDSSDSDSAL. A compositionally biased stretch (low complexity) spans 232–242; the sequence is SLDSSDSDSAL.

The protein localises to the cytoplasm. This is an uncharacterized protein from Rattus norvegicus (Rat).